Here is a 1057-residue protein sequence, read N- to C-terminus: Carbamoyl phosphate synthase large chain (1057 aa).

The tract at residues methionine 1–glutamate 401 is carboxyphosphate synthetic domain. Positions 129, 169, 175, 176, 208, 210, 215, 241, 242, 243, 284, and 298 each coordinate ATP. In terms of domain architecture, ATP-grasp 1 spans arginine 133–valine 327. Residues glutamine 284, glutamate 298, and asparagine 300 each contribute to the Mg(2+) site. Glutamine 284, glutamate 298, and asparagine 300 together coordinate Mn(2+). The oligomerization domain stretch occupies residues tyrosine 402 to serine 546. The segment at isoleucine 547–glycine 929 is carbamoyl phosphate synthetic domain. The ATP-grasp 2 domain occupies glutamate 671–leucine 861. The ATP site is built by arginine 707, arginine 746, leucine 748, glutamate 752, glycine 777, valine 778, histidine 779, serine 780, glutamine 820, and glutamate 832. Mg(2+)-binding residues include glutamine 820, glutamate 832, and asparagine 834. Mn(2+) is bound by residues glutamine 820, glutamate 832, and asparagine 834. An MGS-like domain is found at leucine 930–methionine 1057. Positions leucine 930–methionine 1057 are allosteric domain.

Belongs to the CarB family. Composed of two chains; the small (or glutamine) chain promotes the hydrolysis of glutamine to ammonia, which is used by the large (or ammonia) chain to synthesize carbamoyl phosphate. Tetramer of heterodimers (alpha,beta)4. Mg(2+) serves as cofactor. Mn(2+) is required as a cofactor.

It catalyses the reaction hydrogencarbonate + L-glutamine + 2 ATP + H2O = carbamoyl phosphate + L-glutamate + 2 ADP + phosphate + 2 H(+). The enzyme catalyses hydrogencarbonate + NH4(+) + 2 ATP = carbamoyl phosphate + 2 ADP + phosphate + 2 H(+). It participates in amino-acid biosynthesis; L-arginine biosynthesis; carbamoyl phosphate from bicarbonate: step 1/1. Its pathway is pyrimidine metabolism; UMP biosynthesis via de novo pathway; (S)-dihydroorotate from bicarbonate: step 1/3. Functionally, large subunit of the glutamine-dependent carbamoyl phosphate synthetase (CPSase). CPSase catalyzes the formation of carbamoyl phosphate from the ammonia moiety of glutamine, carbonate, and phosphate donated by ATP, constituting the first step of 2 biosynthetic pathways, one leading to arginine and/or urea and the other to pyrimidine nucleotides. The large subunit (synthetase) binds the substrates ammonia (free or transferred from glutamine from the small subunit), hydrogencarbonate and ATP and carries out an ATP-coupled ligase reaction, activating hydrogencarbonate by forming carboxy phosphate which reacts with ammonia to form carbamoyl phosphate. The polypeptide is Carbamoyl phosphate synthase large chain (Macrococcus caseolyticus (strain JCSC5402) (Macrococcoides caseolyticum)).